A 214-amino-acid chain; its full sequence is tRNA (guanine-N(7)-)-methyltransferase (214 aa).

Glu44, Glu69, Asp96, and Asp118 together coordinate S-adenosyl-L-methionine. Residue Asp118 is part of the active site. Substrate-binding positions include Lys122, Asp154, and 191-194 (TEYE).

This sequence belongs to the class I-like SAM-binding methyltransferase superfamily. TrmB family.

It carries out the reaction guanosine(46) in tRNA + S-adenosyl-L-methionine = N(7)-methylguanosine(46) in tRNA + S-adenosyl-L-homocysteine. It functions in the pathway tRNA modification; N(7)-methylguanine-tRNA biosynthesis. In terms of biological role, catalyzes the formation of N(7)-methylguanine at position 46 (m7G46) in tRNA. In Listeria monocytogenes serotype 4b (strain F2365), this protein is tRNA (guanine-N(7)-)-methyltransferase.